The sequence spans 298 residues: 3-deoxy-manno-octulosonate cytidylyltransferase (298 aa).

A helical transmembrane segment spans residues 22–42; that stretch reads VWVLHGLALGAAAAAAAVAYL.

This sequence belongs to the KdsB family. The cofactor is Mg(2+). In terms of tissue distribution, ubiquitous.

The protein localises to the membrane. It carries out the reaction 3-deoxy-alpha-D-manno-oct-2-ulosonate + CTP = CMP-3-deoxy-beta-D-manno-octulosonate + diphosphate. Its pathway is nucleotide-sugar biosynthesis; CMP-3-deoxy-D-manno-octulosonate biosynthesis; CMP-3-deoxy-D-manno-octulosonate from 3-deoxy-D-manno-octulosonate and CTP: step 1/1. In terms of biological role, catalyzes the production of the sugar nucleotide CMP-3-deoxy-D-manno-octulosonate (CMP-KDO). CTP is the preferred nucleotide donor, and it can partially be replaced with UTP but not with ATP. Activates KDO during the biosynthesis of rhamnogalacturonan II (RG-II), a structurally complex pectic polysaccharide of the primary cell wall. RG-II is essential for the cell wall integrity of rapidly growing tissues and pollen tube growth and elongation. This Zea mays (Maize) protein is 3-deoxy-manno-octulosonate cytidylyltransferase.